Reading from the N-terminus, the 260-residue chain is Adenosylcobinamide-GDP ribazoletransferase (260 aa).

7 consecutive transmembrane segments (helical) span residues 42–62, 64–84, 117–137, 144–164, 192–212, 214–234, and 240–260; these read PLAG…ANAI, LPPL…TGAL, FAAL…MAII, YALL…LAFW, GLGL…VALI, ALVL…AKIG, and TLGA…VMAL.

Belongs to the CobS family. Mg(2+) is required as a cofactor.

The protein localises to the cell inner membrane. The catalysed reaction is alpha-ribazole + adenosylcob(III)inamide-GDP = adenosylcob(III)alamin + GMP + H(+). It catalyses the reaction alpha-ribazole 5'-phosphate + adenosylcob(III)inamide-GDP = adenosylcob(III)alamin 5'-phosphate + GMP + H(+). The protein operates within cofactor biosynthesis; adenosylcobalamin biosynthesis; adenosylcobalamin from cob(II)yrinate a,c-diamide: step 7/7. Its function is as follows. Joins adenosylcobinamide-GDP and alpha-ribazole to generate adenosylcobalamin (Ado-cobalamin). Also synthesizes adenosylcobalamin 5'-phosphate from adenosylcobinamide-GDP and alpha-ribazole 5'-phosphate. This Brucella melitensis biotype 1 (strain ATCC 23456 / CCUG 17765 / NCTC 10094 / 16M) protein is Adenosylcobinamide-GDP ribazoletransferase.